A 552-amino-acid chain; its full sequence is Iduronate 2-sulfatase (552 aa).

An N-terminal signal peptide occupies residues 1 to 29 (MSPPPPPPIWRQLSFSLLLGSFCIALESA). The propeptide occupies 30 to 35 (AQGNSA). Positions 47, 48, and 86 each coordinate Ca(2+). Cysteine 86 serves as the catalytic Nucleophile. The residue at position 86 (cysteine 86) is a 3-oxoalanine (Cys). Asparagine 117 is a glycosylation site (N-linked (GlcNAc...) asparagine). Histidine 140 is an active-site residue. N-linked (GlcNAc...) asparagine glycosylation is present at asparagine 146. An intrachain disulfide couples cysteine 173 to cysteine 186. Residues asparagine 248 and asparagine 282 are each glycosylated (N-linked (GlcNAc...) asparagine). Ca(2+)-binding residues include aspartate 336 and histidine 337. Cysteine 424 and cysteine 434 are disulfide-bonded. Asparagine 515 and asparagine 539 each carry an N-linked (GlcNAc...) asparagine glycan.

It belongs to the sulfatase family. Monomer. The 58-kDa mature form is composed of two chains resulting from proteolitic processing, the 42-kDa chain and the 14-kDa chain that remain stably associated and form the 58-kDa intermediate form which is enzymatically active. Ca(2+) is required as a cofactor. Synthesized as a 75-kDa precursor form in the endoplasmic reticulum (ER), and then processed by proteolytic cleavage through various intermediates to yield a 55-kDa mature form, with the release of an 18 kDa polypeptide. Post-translationally, the conversion to 3-oxoalanine (also known as C-formylglycine, FGly), of a serine or cysteine residue in prokaryotes and of a cysteine residue in eukaryotes, is critical for catalytic activity. As to expression, found to be expressed in alpha and beta pancreatic cells.

It localises to the lysosome. The catalysed reaction is Hydrolysis of the 2-sulfate groups of the L-iduronate 2-sulfate units of dermatan sulfate, heparan sulfate and heparin.. Its function is as follows. Lysosomal enzyme involved in the degradation pathway of dermatan sulfate and heparan sulfate. This Mus musculus (Mouse) protein is Iduronate 2-sulfatase (Ids).